Here is a 318-residue protein sequence, read N- to C-terminus: Pantothenate kinase (318 aa).

Position 96-103 (96-103 (GSVAVGKS)) interacts with ATP.

Belongs to the prokaryotic pantothenate kinase family.

It localises to the cytoplasm. The enzyme catalyses (R)-pantothenate + ATP = (R)-4'-phosphopantothenate + ADP + H(+). The protein operates within cofactor biosynthesis; coenzyme A biosynthesis; CoA from (R)-pantothenate: step 1/5. The polypeptide is Pantothenate kinase (Afipia carboxidovorans (strain ATCC 49405 / DSM 1227 / KCTC 32145 / OM5) (Oligotropha carboxidovorans)).